The following is a 515-amino-acid chain: 1-pyrroline-5-carboxylate dehydrogenase 1 (515 aa).

Active-site residues include Glu286 and Cys320.

Belongs to the aldehyde dehydrogenase family. RocA subfamily.

It catalyses the reaction L-glutamate 5-semialdehyde + NAD(+) + H2O = L-glutamate + NADH + 2 H(+). The protein operates within amino-acid degradation; L-proline degradation into L-glutamate; L-glutamate from L-proline: step 2/2. The polypeptide is 1-pyrroline-5-carboxylate dehydrogenase 1 (rocA1) (Halalkalibacterium halodurans (strain ATCC BAA-125 / DSM 18197 / FERM 7344 / JCM 9153 / C-125) (Bacillus halodurans)).